The following is a 208-amino-acid chain: Ribosome maturation factor RimP (208 aa).

Belongs to the RimP family.

It localises to the cytoplasm. Required for maturation of 30S ribosomal subunits. The sequence is that of Ribosome maturation factor RimP from Bartonella tribocorum (strain CIP 105476 / IBS 506).